The sequence spans 346 residues: Very-long-chain 3-oxoacyl-CoA reductase (346 aa).

A helical membrane pass occupies residues 23–43 (AAWIVFGLGISKMVFLTLNFS). Residues Val-69, Asp-123, Asn-150, Tyr-222, Lys-226, Val-255, and Ser-257 each coordinate NADP(+). Tyr-222 serves as the catalytic Proton donor. The active-site Lowers pKa of active site Tyr is Lys-226.

This sequence belongs to the short-chain dehydrogenases/reductases (SDR) family.

The protein localises to the endoplasmic reticulum membrane. It carries out the reaction a very-long-chain (3R)-3-hydroxyacyl-CoA + NADP(+) = a very-long-chain 3-oxoacyl-CoA + NADPH + H(+). It functions in the pathway lipid metabolism; fatty acid biosynthesis. Its function is as follows. Component of the microsomal membrane bound fatty acid elongation system, which produces the 26-carbon very long-chain fatty acids (VLCFA) from palmitate. Catalyzes the reduction of the 3-ketoacyl-CoA intermediate that is formed in each cycle of fatty acid elongation. VLCFAs serve as precursors for ceramide and sphingolipids. This is Very-long-chain 3-oxoacyl-CoA reductase from Kluyveromyces lactis (strain ATCC 8585 / CBS 2359 / DSM 70799 / NBRC 1267 / NRRL Y-1140 / WM37) (Yeast).